Reading from the N-terminus, the 305-residue chain is Oxidoreductase swnR (305 aa).

It belongs to the NmrA-type oxidoreductase family. Isoflavone reductase subfamily.

The enzyme catalyses L-pipecolate + O2 = L-1-piperideine-6-carboxylate + H2O2 + H(+). The protein operates within mycotoxin biosynthesis. Functionally, oxidoreductase; part of the gene cluster that mediates the biosynthesis of swainsonine (SW), a cytotoxic fungal alkaloid and a potential cancer therapy drug. Swainsonine production occurs via a multibranched pathway and is dispensable for fungal colonization of plants and infection of insect hosts. The first step of swainsonine biosynthesis is the production of the precursor pipecolic acid (PA) via conversion of L-lysine (Lys) to 1-piperideine-6-carboxylate (P6C) by the aminotransferase swnA, the latter being further reduced to PA by the reductase swnR. PA can be converted from lysine by both the SW biosynthetic cluster and the unclustered genes such as lysine cyclodeaminase. The PKS-NRPS hybrid synthetase swnK uptakes and condensates PA and malonyl-CoA with and without skipping of the ketoreductase (KR) domain in order to produce 3 intermediates, 1-oxoindolizidine, (1S)-1-hydroxyindolizin, and (1R)-1-hydroxyindolizine; with the transisomer (1S)-1-hydroxyindolizin being predominant. The terminal thioester reductase (TE) domain of swnK is involved in reduction of the thioester bond to release the intermediate aldehydes. The oxidoreductase swnN could contribute to the reduction of 1-oxoindolizidine to (1S)-1-hydroxyindolizin and (1R)-1-hydroxyindolizine, contributing to the major route of SW production. The dioxygenase swnH2 would be responsible for the oxidization of (1R)-1-hydroxyindolizine into (1R,2S)-1,2-dihydroxyindolizine and of (1S)-1-hydroxyindolizin to yield both (1R,2S)-1,2-dihydroxyindolizine and (1S,2S)-1,2-dihydroxyindolizine. The dioxygenase swnH1 then performs the conversion of the 1,2-dihydroxyindolizine epimers to SW. The chain is Oxidoreductase swnR from Metarhizium robertsii (strain ARSEF 23 / ATCC MYA-3075) (Metarhizium anisopliae (strain ARSEF 23)).